Consider the following 447-residue polypeptide: MGKEKIHISIVVIGHVDSGKSTTTGHLIYKLGGIDKRVIERFEKEAAEMNKRSFKYAWVLDKLKAERERGITIDIALWKFETTKYSCTVIDAPGHRDFIKNMITGTSQADCAVLIIDSTTGVFQAGISKDGQTREHALLAFTLGVKQMICCCNKMDATTPKYSKSRYDEIVKEVSSYLKKVGYNPDKVPFVPISGFEGDNMIERSSNLDWYKGPTLLEALDQINEPKRPSDKPLHLPLQDVYKIGGIGTVPVGRVETGVIKPGMVVTFGPTGLTTEVKSVEVHHESLLEALPGDNVGFNVKNVAVKDLKRGYVASNSKDDPAKEAANFTAQVIIMNHPGQISNGYAPVLDCHTSHIAVKFAEIQTKIDRRSGKELEAAPKFLKNGDAGFVKMIPTKPMVVETFAQYPPLGRFAVRDMRQTVAVGVIKSVEKKEPTGAKVTKAAIKKK.

Residues 5-230 form the tr-type G domain; sequence KIHISIVVIG…DQINEPKRPS (226 aa). A G1 region spans residues 14–21; sequence GHVDSGKS. 14–21 is a binding site for GTP; the sequence is GHVDSGKS. An N6,N6-dimethyllysine modification is found at K55. The tract at residues 70-74 is G2; that stretch reads GITID. K79 bears the N6,N6,N6-trimethyllysine mark. A G3 region spans residues 91–94; sequence DAPG. GTP contacts are provided by residues 91–95 and 153–156; these read DAPGH and NKMD. The tract at residues 153 to 156 is G4; sequence NKMD. K187 carries the N6,N6,N6-trimethyllysine modification. The interval 194 to 196 is G5; sequence SGF. K261 carries the post-translational modification N6-methyllysine. E289 is subject to 5-glutamyl glycerylphosphorylethanolamine. Position 306 is an N6,N6,N6-trimethyllysine (K306). E362 is modified (5-glutamyl glycerylphosphorylethanolamine). K396 is modified (N6,N6,N6-trimethyllysine).

It belongs to the TRAFAC class translation factor GTPase superfamily. Classic translation factor GTPase family. EF-Tu/EF-1A subfamily.

The protein localises to the cytoplasm. Its function is as follows. This protein promotes the GTP-dependent binding of aminoacyl-tRNA to the A-site of ribosomes during protein biosynthesis. This is Elongation factor 1-alpha from Hordeum vulgare (Barley).